The sequence spans 545 residues: Coiled-coil domain-containing protein 60 (545 aa).

Residues N72–Q99 are a coiled coil. Positions P224–E284 are disordered. The span at R238 to S259 shows a compositional bias: low complexity.

In Mus musculus (Mouse), this protein is Coiled-coil domain-containing protein 60 (Ccdc60).